The primary structure comprises 344 residues: L-erythro-3,5-diaminohexanoate dehydrogenase (344 aa).

Belongs to the KDD family. In terms of assembly, homodimer.

The catalysed reaction is (3S,5S)-3,5-diaminohexanoate + NAD(+) + H2O = (5S)-5-amino-3-oxohexanoate + NH4(+) + NADH + H(+). Its pathway is amino-acid degradation; L-lysine degradation via acetate pathway. Its function is as follows. Involved in the anaerobic fermentation of lysine. Catalyzes the oxidative deamination of L-erythro-3,5-diaminohexanoate (3,5-DAH) to 3-keto-5-aminohexanoate (KAH). This Acetoanaerobium sticklandii (strain ATCC 12662 / DSM 519 / JCM 1433 / CCUG 9281 / NCIMB 10654 / HF) (Clostridium sticklandii) protein is L-erythro-3,5-diaminohexanoate dehydrogenase.